Consider the following 487-residue polypeptide: NADH-quinone oxidoreductase subunit N (487 aa).

14 consecutive transmembrane segments (helical) span residues 16 to 36, 45 to 65, 79 to 99, 111 to 131, 133 to 153, 168 to 188, 212 to 232, 257 to 276, 281 to 298, 306 to 326, 333 to 353, 378 to 398, 413 to 435, and 457 to 477; these read VIMP…VNVF, LAWL…TGWG, NFAI…VLIS, GELY…AAAT, LMTI…LAGF, FLLG…IYGV, LLIG…AAPF, AAGF…AMIA, LLWI…FTAL, MLAY…ASGT, ILFY…VIVL, ALAM…AGFI, IWLA…RVIV, and LALV…SMIL.

It belongs to the complex I subunit 2 family. In terms of assembly, NDH-1 is composed of 14 different subunits. Subunits NuoA, H, J, K, L, M, N constitute the membrane sector of the complex.

It is found in the cell inner membrane. The catalysed reaction is a quinone + NADH + 5 H(+)(in) = a quinol + NAD(+) + 4 H(+)(out). NDH-1 shuttles electrons from NADH, via FMN and iron-sulfur (Fe-S) centers, to quinones in the respiratory chain. The immediate electron acceptor for the enzyme in this species is believed to be ubiquinone. Couples the redox reaction to proton translocation (for every two electrons transferred, four hydrogen ions are translocated across the cytoplasmic membrane), and thus conserves the redox energy in a proton gradient. In Trichlorobacter lovleyi (strain ATCC BAA-1151 / DSM 17278 / SZ) (Geobacter lovleyi), this protein is NADH-quinone oxidoreductase subunit N.